The sequence spans 306 residues: MWRQSMITVLSGGTGTPKLLQGLVRVVDPEEITVIVNTVENGYLSGVYVAPDVDTVLYTLAGIINEETWYGVEGDTFITHETLRELGCPELLRIGDRDRAFKIQKTLLLGEMPLHRAVEIQSRALGVESRVLPMSNEDSDIVIVTDEGDMEFHEFLVERRSEPGVLDVRFSRVKPAPGVLDAIESADMVILGPSNPVTSIGPIINMEGVTDSLRKVNVSAVSPFTGGRPFSGPAGKFMEAKGYDASSLGVAEIYADFLDRLVIDETDSDLKGEIEKLIKEVTITKTNMENIGDKIMLARILLGEIL.

7,8-didemethyl-8-hydroxy-5-deazariboflavin is bound by residues aspartate 54 and arginine 93.

The protein belongs to the CofD family. Homodimer. The cofactor is Mg(2+).

The enzyme catalyses (2S)-lactyl-2-diphospho-5'-guanosine + 7,8-didemethyl-8-hydroxy-5-deazariboflavin = oxidized coenzyme F420-0 + GMP + H(+). It participates in cofactor biosynthesis; coenzyme F420 biosynthesis. In terms of biological role, catalyzes the transfer of the 2-phospholactate moiety from (2S)-lactyl-2-diphospho-5'-guanosine to 7,8-didemethyl-8-hydroxy-5-deazariboflavin (FO) with the formation of oxidized coenzyme F420-0 and GMP. This is 2-phospho-L-lactate transferase from Methanothermobacter thermautotrophicus (strain ATCC 29096 / DSM 1053 / JCM 10044 / NBRC 100330 / Delta H) (Methanobacterium thermoautotrophicum).